A 655-amino-acid chain; its full sequence is Putative sensor protein Sfri_3689 (655 aa).

A signal peptide spans 1 to 17; sequence MKTLLLLLIIITMPVLA. The helical transmembrane segment at 252 to 272 threads the bilayer; sequence FALAILVAIMSAIGMIFTGFI. The 235-residue stretch at 419–653 folds into the Histidine kinase domain; it reads GIAHEINNPT…QIRLIFALAQ (235 aa). A Phosphohistidine; by autocatalysis modification is found at H422.

The protein resides in the cell membrane. The enzyme catalyses ATP + protein L-histidine = ADP + protein N-phospho-L-histidine.. In Shewanella frigidimarina (strain NCIMB 400), this protein is Putative sensor protein Sfri_3689.